Here is a 56-residue protein sequence, read N- to C-terminus: Large ribosomal subunit protein eL37 (56 aa).

4 residues coordinate Zn(2+): Cys-19, Cys-22, Cys-34, and Cys-37. A C4-type zinc finger spans residues 19 to 37 (CRRCGSVSFNVHTKQCTSC).

This sequence belongs to the eukaryotic ribosomal protein eL37 family. The cofactor is Zn(2+).

Binds to the 23S rRNA. This Methanosarcina acetivorans (strain ATCC 35395 / DSM 2834 / JCM 12185 / C2A) protein is Large ribosomal subunit protein eL37 (rpl37e).